Consider the following 226-residue polypeptide: LexA repressor (226 aa).

A DNA-binding region (H-T-H motif) is located at residues 28 to 48 (RAEICQSLGFRSPNAAESHLR). Catalysis depends on for autocatalytic cleavage activity residues serine 133 and lysine 170.

The protein belongs to the peptidase S24 family. As to quaternary structure, homodimer.

It carries out the reaction Hydrolysis of Ala-|-Gly bond in repressor LexA.. In terms of biological role, represses a number of genes involved in the response to DNA damage (SOS response), including recA and lexA. In the presence of single-stranded DNA, RecA interacts with LexA causing an autocatalytic cleavage which disrupts the DNA-binding part of LexA, leading to derepression of the SOS regulon and eventually DNA repair. The polypeptide is LexA repressor (Halorhodospira halophila (strain DSM 244 / SL1) (Ectothiorhodospira halophila (strain DSM 244 / SL1))).